Reading from the N-terminus, the 523-residue chain is NAD(P)H-quinone oxidoreductase subunit 2 (523 aa).

The next 13 membrane-spanning stretches (helical) occupy residues 29–49 (AVLP…VDLA), 57–77 (WVPP…ALQW), 94–114 (LAVA…LISW), 132–152 (LAAT…SIFI), 182–202 (LLVG…LYGL), 221–241 (PIAA…IAAV), 255–275 (PTPV…ALAL), 291–311 (LLFT…ALAQ), 317–337 (MLAY…VCGT), 345–365 (VLYM…IILF), 389–409 (LGLS…GFFG), 424–444 (LLVV…ISVI), and 477–497 (VALI…NPLF).

The protein belongs to the complex I subunit 2 family. As to quaternary structure, NDH-1 can be composed of about 15 different subunits; different subcomplexes with different compositions have been identified which probably have different functions.

It localises to the cellular thylakoid membrane. It catalyses the reaction a plastoquinone + NADH + (n+1) H(+)(in) = a plastoquinol + NAD(+) + n H(+)(out). The enzyme catalyses a plastoquinone + NADPH + (n+1) H(+)(in) = a plastoquinol + NADP(+) + n H(+)(out). NDH-1 shuttles electrons from an unknown electron donor, via FMN and iron-sulfur (Fe-S) centers, to quinones in the respiratory and/or the photosynthetic chain. The immediate electron acceptor for the enzyme in this species is believed to be plastoquinone. Couples the redox reaction to proton translocation, and thus conserves the redox energy in a proton gradient. Cyanobacterial NDH-1 also plays a role in inorganic carbon-concentration. In Synechococcus sp. (strain CC9902), this protein is NAD(P)H-quinone oxidoreductase subunit 2.